We begin with the raw amino-acid sequence, 334 residues long: uncharacterized protein (334 aa).

This sequence belongs to the ADP-ribosylglycohydrolase family.

This is an uncharacterized protein from Escherichia coli (strain K12).